A 482-amino-acid chain; its full sequence is Abscisic acid 8'-hydroxylase 2 (482 aa).

Residues Pro20–Leu40 form a helical membrane-spanning segment. Cys431 provides a ligand contact to heme.

The protein belongs to the cytochrome P450 family. It depends on heme as a cofactor. As to expression, mainly expressed in dry seeds. Lower expression in rosette leaves, flowers, siliques and stems. Not expressed in roots. Expressed in both endosperm and vascular tissues of embryo during the seed development and in cortex and endodermis in germinating embryo.

The protein resides in the membrane. The enzyme catalyses 2-cis-(+)-abscisate + reduced [NADPH--hemoprotein reductase] + O2 = (+)-8'-hydroxyabscisate + oxidized [NADPH--hemoprotein reductase] + H2O + H(+). Its pathway is plant hormone degradation; abscisic acid degradation. Functionally, involved in the oxidative degradation of abscisic acid, but not in the isomerization of the produced 8'-hydroxyabscisic acid (8'-OH-ABA) to (-)-phaseic acid (PA). Involved in the control of seed dormancy and germination. This is Abscisic acid 8'-hydroxylase 2 (CYP707A2) from Arabidopsis thaliana (Mouse-ear cress).